The sequence spans 449 residues: Aspartate aminotransferase 3, chloroplastic (449 aa).

A chloroplast-targeting transit peptide spans 1 to 43; it reads MKTTHFSSSSSSDRRIGALLRHLNSGSDSDNLSSLYASPTSGG. L-aspartate-binding residues include Gly81, Trp178, and Asn231. N6-(pyridoxal phosphate)lysine is present on Lys295. Arg423 is an L-aspartate binding site.

Belongs to the class-I pyridoxal-phosphate-dependent aminotransferase family. Homodimer. It depends on pyridoxal 5'-phosphate as a cofactor. As to expression, expressed in roots, cauline leaves, flowers, hypocotyl epidermis and root hair cells.

Its subcellular location is the plastid. The protein resides in the chloroplast. The enzyme catalyses L-aspartate + 2-oxoglutarate = oxaloacetate + L-glutamate. In terms of biological role, amino acid aminotransferase important for the metabolism of amino acids and Krebs-cycle related organic acids. No activity with D-Asp or D-Ala as amino donors. In plants, it is involved in nitrogen metabolism and in aspects of carbon and energy metabolism. In Arabidopsis thaliana (Mouse-ear cress), this protein is Aspartate aminotransferase 3, chloroplastic (ASP3).